Reading from the N-terminus, the 101-residue chain is TrfB transcriptional repressor protein (101 aa).

Positions 37 to 56 form a DNA-binding region, H-T-H motif; it reads QATFATSLGLTRGAVSQAVH.

Functionally, in conjunction with KorB, inhibits the transcription of kilA, trfA and korAB operons. In conjunction with KorC is responsible for the negative control of kilC and kilE operons. The chain is TrfB transcriptional repressor protein (trfB) from Escherichia coli.